The following is a 116-amino-acid chain: Vesicle-associated membrane protein 2 (116 aa).

Residues 1–33 form a disordered region; sequence MSATAATAPPAAPAGEGGPPAPPPNLTSNRRLQ. Serine 2 bears the N-acetylserine mark. At 2–94 the chain is on the cytoplasmic side; it reads SATAATAPPA…KRKYWWKNLK (93 aa). Positions 31–91 constitute a v-SNARE coiled-coil homology domain; it reads RLQQTQAQVD…AKLKRKYWWK (61 aa). The required for interaction with SEPT8 stretch occupies residues 92–116; it reads NLKMMIILGVICAIILIIIIVYFSS. Residues 95–114 traverse the membrane as a helical; Anchor for type IV membrane protein segment; it reads MMIILGVICAIILIIIIVYF. At 115 to 116 the chain is on the vesicular side; the sequence is SS.

The protein belongs to the synaptobrevin family. In terms of assembly, part of the SNARE core complex containing SNAP25, VAMP2 and STX1A; this complex constitutes the basic catalytic machinery of the complex neurotransmitter release apparatus. Recruited to the SNARE complex following binding of the SNARE complex component STX1A to STXBP1. This complex binds to CPLX1. Interacts with POPDC1 and STX4. Interacts with VAPA and VAPB. Interacts with WDFY2, PRKCZ and PRKCI. Forms a complex with WDFY2 and PRKCZ. Interacts (via N-terminus) with KCNB1 (via N-terminus and C-terminus); stimulates the channel inactivation rate of KCNB1. Interacts with SEPT8; the interaction inhibits interaction of VAMP2 with SYP. Interacts with SYP; the interaction is inhibited by interaction with SEPT8. Interacts with PICALM. Interacts with alpha-synuclein/SNCA. Interacts with STX3. Phosphorylated by PRKCZ in vitro and this phosphorylation is increased in the presence of WDFY2.

Its subcellular location is the cytoplasmic vesicle. The protein localises to the secretory vesicle. The protein resides in the synaptic vesicle membrane. It localises to the cell membrane. Its function is as follows. Involved in the targeting and/or fusion of transport vesicles to their target membrane. Major SNARE protein of synaptic vesicles which mediates fusion of synaptic vesicles to release neurotransmitters. Essential for fast vesicular exocytosis and activity-dependent neurotransmitter release as well as fast endocytosis that mediates rapid reuse of synaptic vesicles. Modulates the gating characteristics of the delayed rectifier voltage-dependent potassium channel KCNB1. This is Vesicle-associated membrane protein 2 (VAMP2) from Bos taurus (Bovine).